A 182-amino-acid polypeptide reads, in one-letter code: Protein Syd (182 aa).

This sequence belongs to the Syd family.

The protein localises to the cell inner membrane. Its function is as follows. Interacts with the SecY protein in vivo. May bind preferentially to an uncomplexed state of SecY, thus functioning either as a chelating agent for excess SecY in the cell or as a regulatory factor that negatively controls the translocase function. The polypeptide is Protein Syd (Aeromonas salmonicida (strain A449)).